We begin with the raw amino-acid sequence, 1119 residues long: Agglutinin-like protein 3 (1119 aa).

The first 17 residues, M1–A17, serve as a signal peptide directing secretion. Disulfide bonds link C73-C150, C96-C112, C205-C298, and C227-C256. ALS repeat units follow at residues T365–P396, T401–P432, and V438–P469. Residue N471 is glycosylated (N-linked (GlcNAc...) asparagine). ALS repeat units lie at residues V474 to P505 and V510 to P541. Residue N543 is glycosylated (N-linked (GlcNAc...) asparagine). One copy of the ALS 6 repeat lies at V546–P577. N-linked (GlcNAc...) asparagine glycosylation occurs at N579. 2 ALS repeats span residues V582–P613 and V618–P649. N651 carries an N-linked (GlcNAc...) asparagine glycan. One copy of the ALS 9 repeat lies at V654–P685. Residue N687 is glycosylated (N-linked (GlcNAc...) asparagine). An ALS 10 repeat occupies V690–P721. N-linked (GlcNAc...) asparagine glycosylation is present at N723. The ALS 11 repeat unit spans residues V726–P757. N759 carries N-linked (GlcNAc...) asparagine glycosylation. ALS repeat units lie at residues V762 to P793 and V798 to Y827. An N-linked (GlcNAc...) asparagine glycan is attached at N845. The interval M892–T1077 is disordered. The span at T894–T929 shows a compositional bias: low complexity. 2 stretches are compositionally biased toward polar residues: residues A930–S941 and T947–S965. The span at T974–T983 shows a compositional bias: low complexity. Residue N987 is glycosylated (N-linked (GlcNAc...) asparagine). Composition is skewed to low complexity over residues A998–V1022 and A1035–A1048. 2 N-linked (GlcNAc...) asparagine glycosylation sites follow: N1050 and N1061. Low complexity predominate over residues T1057 to T1077. S1098 carries GPI-anchor amidated serine lipidation. A propeptide spans G1099–I1119 (removed in mature form).

Belongs to the ALS family. In terms of processing, the GPI-anchor is attached to the protein in the endoplasmic reticulum and serves to target the protein to the cell surface. There, the glucosamine-inositol phospholipid moiety is cleaved off and the GPI-modified mannoprotein is covalently attached via its lipidless GPI glycan remnant to the 1,6-beta-glucan of the outer cell wall layer.

The protein resides in the cell membrane. It is found in the secreted. It localises to the cell wall. Its function is as follows. Cell surface adhesion protein which mediates both yeast-to-host tissue adherence and yeast aggregation. Plays an important role in the biofilm formation and pathogenesis of C.albicans infections. Necessary for C.albicans to bind to N-cadherin on endothelial cells and E-cadherin on oral epithelial cells and subsequent endocytosis by these cells. During disseminated infection, mediates initial trafficking to the brain and renal cortex and contributes to fungal persistence in the kidneys. The protein is Agglutinin-like protein 3 (ALS3) of Candida albicans (Yeast).